Here is a 743-residue protein sequence, read N- to C-terminus: 1,4-alpha-glucan branching enzyme GlgB (743 aa).

Asp423 serves as the catalytic Nucleophile. The Proton donor role is filled by Glu476.

This sequence belongs to the glycosyl hydrolase 13 family. GlgB subfamily. Monomer.

It catalyses the reaction Transfers a segment of a (1-&gt;4)-alpha-D-glucan chain to a primary hydroxy group in a similar glucan chain.. Its pathway is glycan biosynthesis; glycogen biosynthesis. Functionally, catalyzes the formation of the alpha-1,6-glucosidic linkages in glycogen by scission of a 1,4-alpha-linked oligosaccharide from growing alpha-1,4-glucan chains and the subsequent attachment of the oligosaccharide to the alpha-1,6 position. The chain is 1,4-alpha-glucan branching enzyme GlgB from Pseudomonas fluorescens (strain Pf0-1).